The primary structure comprises 169 residues: UPF0303 protein BMEI0598 (169 aa).

This sequence belongs to the UPF0303 family.

This chain is UPF0303 protein BMEI0598, found in Brucella melitensis biotype 1 (strain ATCC 23456 / CCUG 17765 / NCTC 10094 / 16M).